The following is a 67-amino-acid chain: Small ribosomal subunit protein eS17 (67 aa).

It belongs to the eukaryotic ribosomal protein eS17 family. As to quaternary structure, part of the 30S ribosomal subunit.

The chain is Small ribosomal subunit protein eS17 from Pyrococcus furiosus (strain ATCC 43587 / DSM 3638 / JCM 8422 / Vc1).